A 367-amino-acid chain; its full sequence is Tetraprenyl-beta-curcumene synthase (367 aa).

The protein belongs to the large terpene synthase family.

It catalyses the reaction all-trans-heptaprenyl diphosphate = (R)-tetraprenyl-beta-curcumene + diphosphate. Catalyzes the transformation of a linear C35 prenyl diphosphate chain to form tetraprenyl-beta-curcumene. This chain is Tetraprenyl-beta-curcumene synthase (ytpB), found in Bacillus subtilis (strain 168).